The following is a 599-amino-acid chain: Laccase-2 (599 aa).

The first 19 residues, 1-19, serve as a signal peptide directing secretion; sequence MARSTTSLFALSLVASAFA. 2 consecutive Plastocyanin-like domains span residues 21 to 145 and 157 to 307; these read VVDY…IVIY and VDDE…LVYE. Cu cation-binding residues include H82, H84, H127, and H129. C103 and C588 are oxidised to a cystine. N207, N208, N231, N397, and N443 each carry an N-linked (GlcNAc...) asparagine glycan. Residues 450-567 enclose the Plastocyanin-like 3 domain; the sequence is DVPTLLKILT…EGFAMVFAEA (118 aa). Positions 497, 500, 502, 549, 550, 551, and 555 each coordinate Cu cation.

Belongs to the multicopper oxidase family. Homodimer. Cu cation is required as a cofactor. In terms of tissue distribution, in mycelia, at a lower level than LCC4.

The protein resides in the secreted. It catalyses the reaction 4 hydroquinone + O2 = 4 benzosemiquinone + 2 H2O. Functionally, lignin degradation and detoxification of lignin-derived products. The sequence is that of Laccase-2 (LCC2) from Thanatephorus cucumeris (Black scurf of potato).